Reading from the N-terminus, the 156-residue chain is ATP synthase subunit b (156 aa).

Residues 12–32 (VAFFIFVLFCMKFVWPPVIAA) traverse the membrane as a helical segment.

The protein belongs to the ATPase B chain family. In terms of assembly, F-type ATPases have 2 components, F(1) - the catalytic core - and F(0) - the membrane proton channel. F(1) has five subunits: alpha(3), beta(3), gamma(1), delta(1), epsilon(1). F(0) has three main subunits: a(1), b(2) and c(10-14). The alpha and beta chains form an alternating ring which encloses part of the gamma chain. F(1) is attached to F(0) by a central stalk formed by the gamma and epsilon chains, while a peripheral stalk is formed by the delta and b chains.

The protein resides in the cell inner membrane. F(1)F(0) ATP synthase produces ATP from ADP in the presence of a proton or sodium gradient. F-type ATPases consist of two structural domains, F(1) containing the extramembraneous catalytic core and F(0) containing the membrane proton channel, linked together by a central stalk and a peripheral stalk. During catalysis, ATP synthesis in the catalytic domain of F(1) is coupled via a rotary mechanism of the central stalk subunits to proton translocation. In terms of biological role, component of the F(0) channel, it forms part of the peripheral stalk, linking F(1) to F(0). The chain is ATP synthase subunit b from Pseudomonas paraeruginosa (strain DSM 24068 / PA7) (Pseudomonas aeruginosa (strain PA7)).